The sequence spans 352 residues: Protein-glutamate methylesterase/protein-glutamine glutaminase 2 (352 aa).

The 119-residue stretch at 6–124 (KVLIVEDSLV…NAGYDTMAAK (119 aa)) folds into the Response regulatory domain. Asp57 is subject to 4-aspartylphosphate. Residues 162–343 (PGTYSMVGIV…LPLPAIAARL (182 aa)) form the CheB-type methylesterase domain. Residues Ser173, His200, and Asp292 contribute to the active site.

Belongs to the CheB family. Post-translationally, phosphorylated by CheA. Phosphorylation of the N-terminal regulatory domain activates the methylesterase activity.

It localises to the cytoplasm. It catalyses the reaction [protein]-L-glutamate 5-O-methyl ester + H2O = L-glutamyl-[protein] + methanol + H(+). The enzyme catalyses L-glutaminyl-[protein] + H2O = L-glutamyl-[protein] + NH4(+). Functionally, involved in chemotaxis. Part of a chemotaxis signal transduction system that modulates chemotaxis in response to various stimuli. Catalyzes the demethylation of specific methylglutamate residues introduced into the chemoreceptors (methyl-accepting chemotaxis proteins or MCP) by CheR. Also mediates the irreversible deamidation of specific glutamine residues to glutamic acid. The protein is Protein-glutamate methylesterase/protein-glutamine glutaminase 2 of Paramagnetospirillum magneticum (strain ATCC 700264 / AMB-1) (Magnetospirillum magneticum).